The following is a 191-amino-acid chain: MSEELPPSEAPRPDEADAVDETRATGETRGAAQEPGASDADAWATACAEDLEAEKARRRAAYGPPPGSAAEELRRLVDTVADKLSGLQSPLLGQVAGPAAQQVVRQVVQQAKAAVEPVIERNPDLFDHLAAAGGELLAAYRSAVQNQERRWTTGDTAPKDPSDPRDLDERGTDGRDEGDGGTGPGQRIDLD.

Disordered regions lie at residues 1 to 42 (MSEE…DADA) and 145 to 191 (QNQE…IDLD). Composition is skewed to basic and acidic residues over residues 11-26 (PRPD…RATG) and 147-178 (QERR…RDEG).

It may form a heterotetramer of two glucokinase subunits (glk) with two ORF2 proteins.

Its function is as follows. May be involved in glucose transport or metabolism. This is an uncharacterized protein from Streptomyces coelicolor (strain ATCC BAA-471 / A3(2) / M145).